A 258-amino-acid chain; its full sequence is Imidazole glycerol phosphate synthase subunit HisF (258 aa).

Catalysis depends on residues D11 and D130.

The protein belongs to the HisA/HisF family. As to quaternary structure, heterodimer of HisH and HisF.

The protein resides in the cytoplasm. The catalysed reaction is 5-[(5-phospho-1-deoxy-D-ribulos-1-ylimino)methylamino]-1-(5-phospho-beta-D-ribosyl)imidazole-4-carboxamide + L-glutamine = D-erythro-1-(imidazol-4-yl)glycerol 3-phosphate + 5-amino-1-(5-phospho-beta-D-ribosyl)imidazole-4-carboxamide + L-glutamate + H(+). It participates in amino-acid biosynthesis; L-histidine biosynthesis; L-histidine from 5-phospho-alpha-D-ribose 1-diphosphate: step 5/9. Functionally, IGPS catalyzes the conversion of PRFAR and glutamine to IGP, AICAR and glutamate. The HisF subunit catalyzes the cyclization activity that produces IGP and AICAR from PRFAR using the ammonia provided by the HisH subunit. This is Imidazole glycerol phosphate synthase subunit HisF from Salmonella arizonae (strain ATCC BAA-731 / CDC346-86 / RSK2980).